The primary structure comprises 306 residues: Ornithine carbamoyltransferase (306 aa).

Residues 53-56, glutamine 80, arginine 104, and 131-134 each bind carbamoyl phosphate; these read STRT and HPCQ. Residues asparagine 162, aspartate 220, and 224-225 contribute to the L-ornithine site; that span reads SM. Residues 260–261 and arginine 288 contribute to the carbamoyl phosphate site; that span reads CL.

Belongs to the aspartate/ornithine carbamoyltransferase superfamily. OTCase family.

The protein resides in the cytoplasm. It carries out the reaction carbamoyl phosphate + L-ornithine = L-citrulline + phosphate + H(+). The protein operates within amino-acid biosynthesis; L-arginine biosynthesis; L-arginine from L-ornithine and carbamoyl phosphate: step 1/3. In terms of biological role, reversibly catalyzes the transfer of the carbamoyl group from carbamoyl phosphate (CP) to the N(epsilon) atom of ornithine (ORN) to produce L-citrulline. The protein is Ornithine carbamoyltransferase of Methylobacillus flagellatus (strain ATCC 51484 / DSM 6875 / VKM B-1610 / KT).